We begin with the raw amino-acid sequence, 455 residues long: Exodeoxyribonuclease 7 large subunit (455 aa).

It belongs to the XseA family. In terms of assembly, heterooligomer composed of large and small subunits.

The protein resides in the cytoplasm. The catalysed reaction is Exonucleolytic cleavage in either 5'- to 3'- or 3'- to 5'-direction to yield nucleoside 5'-phosphates.. Functionally, bidirectionally degrades single-stranded DNA into large acid-insoluble oligonucleotides, which are then degraded further into small acid-soluble oligonucleotides. This chain is Exodeoxyribonuclease 7 large subunit, found in Escherichia coli (strain SMS-3-5 / SECEC).